A 350-amino-acid chain; its full sequence is Induced myeloid leukemia cell differentiation protein Mcl-1 (350 aa).

Residues Lys-5 and Lys-40 each participate in a glycyl lysine isopeptide (Lys-Gly) (interchain with G-Cter in ubiquitin) cross-link. The tract at residues 47 to 87 (EIGGGEAGAVIGGSAGASPPSTLTPDSRRVARPPPIGAEVP) is disordered. Over residues 50–61 (GGEAGAVIGGSA) the composition is skewed to gly residues. Residues 104 to 175 (RAAPLEEMEA…PAEEEEDELY (72 aa)) are PEST-like. Ser-121 is subject to Phosphoserine. Residue Lys-136 forms a Glycyl lysine isopeptide (Lys-Gly) (interchain with G-Cter in ubiquitin) linkage. The disordered stretch occupies residues 148–171 (GESGNNTSTDGSLPSTPPPAEEEE). The span at 150–161 (SGNNTSTDGSLP) shows a compositional bias: polar residues. Ser-159 is modified (phosphoserine; by GSK3-alpha and GSK3-beta). Ser-162 is modified (phosphoserine). At Thr-163 the chain carries Phosphothreonine; by MAPK. Residues Lys-194 and Lys-197 each participate in a glycyl lysine isopeptide (Lys-Gly) (interchain with G-Cter in ubiquitin) cross-link. Residues 209–223 (ALETLRRVGDGVQRN) carry the BH3 motif. A BH1 motif is present at residues 252-272 (HVFSDGVTNWGRIVTLISFGA). The BH2 signature appears at 304 to 319 (DWLVKQRGWDGFVEFF). A helical transmembrane segment spans residues 328–348 (IRNVLLAFAGVAGVGAGLAYL).

The protein belongs to the Bcl-2 family. As to quaternary structure, interacts with HIF3A (via C-terminus domain). Interacts with BAD, BOK, BIK and BMF. Interacts with PMAIP1. Interacts with BBC3. Isoform 1 interacts with BAX, BAK1 and TPT1. Heterodimer of isoform 1 and isoform 2. Homodimers of isoform 1 or isoform 2 are not detected. Isoform 2 does not interact with pro-apoptotic BCL2-related proteins. Interacts with RTL10/BOP. Interacts with BCL2L11; may sequester BCL2L11 to prevent its pro-apoptotic activity. Interacts with GIMAP5 and HSPA8/HSC70; the interaction between HSPA8 and MCL1 is impaired in the absence of GIMAP5. In terms of processing, cleaved by CASP3 during apoptosis. In intact cells cleavage occurs preferentially after Asp-127, yielding a pro-apoptotic 28 kDa C-terminal fragment. Rapidly degraded in the absence of phosphorylation on Thr-163 in the PEST region. Post-translationally, phosphorylated on Ser-159, by GSK3, in response to IL3/interleukin-3 withdrawal. Phosphorylation at Ser-159 induces ubiquitination and proteasomal degradation, abrogating the anti-apoptotic activity. Treatment with taxol or okadaic acid induces phosphorylation on additional sites. In terms of processing, ubiquitinated. Ubiquitination is induced by phosphorylation at Ser-159. Deubiquitinated by USP20; leading to increased stability.

The protein resides in the membrane. It is found in the cytoplasm. Its subcellular location is the mitochondrion. It localises to the nucleus. The protein localises to the nucleoplasm. Its function is as follows. Involved in the regulation of apoptosis versus cell survival, and in the maintenance of viability but not of proliferation. Mediates its effects by interactions with a number of other regulators of apoptosis. Isoform 1 inhibits apoptosis. Isoform 2 promotes apoptosis. The chain is Induced myeloid leukemia cell differentiation protein Mcl-1 (MCL1) from Homo sapiens (Human).